The primary structure comprises 448 residues: N-succinylarginine dihydrolase (448 aa).

Substrate contacts are provided by residues 19 to 28 (AGLSSGNIAS), asparagine 110, and 137 to 138 (HR). Glutamate 174 is an active-site residue. Arginine 216 contributes to the substrate binding site. Residue histidine 252 is part of the active site. Aspartate 254 and asparagine 366 together coordinate substrate. Cysteine 372 acts as the Nucleophile in catalysis.

Belongs to the succinylarginine dihydrolase family. In terms of assembly, homodimer.

It catalyses the reaction N(2)-succinyl-L-arginine + 2 H2O + 2 H(+) = N(2)-succinyl-L-ornithine + 2 NH4(+) + CO2. It participates in amino-acid degradation; L-arginine degradation via AST pathway; L-glutamate and succinate from L-arginine: step 2/5. Its function is as follows. Catalyzes the hydrolysis of N(2)-succinylarginine into N(2)-succinylornithine, ammonia and CO(2). The sequence is that of N-succinylarginine dihydrolase from Legionella pneumophila (strain Paris).